The sequence spans 62 residues: Short neurotoxin 1 (62 aa).

A compositionally biased stretch (polar residues) spans methionine 1–cysteine 17. The disordered stretch occupies residues methionine 1–glycine 20. 4 cysteine pairs are disulfide-bonded: cysteine 3-cysteine 24, cysteine 17-cysteine 41, cysteine 43-cysteine 54, and cysteine 55-cysteine 60.

This sequence belongs to the three-finger toxin family. Short-chain subfamily. Type I alpha-neurotoxin sub-subfamily. Expressed by the venom gland.

The protein resides in the secreted. Its function is as follows. Binds to muscle nicotinic acetylcholine receptor (nAChR) and inhibit acetylcholine from binding to the receptor, thereby impairing neuromuscular transmission. This is Short neurotoxin 1 from Acanthophis antarcticus (Common death adder).